Here is an 895-residue protein sequence, read N- to C-terminus: Serine/threonine-protein kinase-like protein ACR4 (895 aa).

The N-terminal stretch at 1–29 (MRMFETRAREWILLVKLVLFTSIWQLASA) is a signal peptide. Residues 30–434 (LGSMSSIAIS…FWSLQLPIAT (405 aa)) are Extracellular-facing. A run of 7 repeats spans residues 38–73 (ISYG…GTPG), 77–112 (FIGL…GVPQ), 130–167 (LCGL…VFDK), 169–202 (LHSL…QVIS), 210–245 (FQKI…EEVT), 262–296 (LLAV…TPAP), and 301–339 (FYDL…AVSP). The tract at residues 38 to 339 (ISYGEGGSVF…PASIPLAVSP (302 aa)) is 7 X 36 AA repeats. 2 N-linked (GlcNAc...) asparagine glycosylation sites follow: Asn-158 and Asn-196. Asn-290 is a glycosylation site (N-linked (GlcNAc...) asparagine). The TNFR-Cys repeat unit spans residues 346–395 (PCPPGTHELSNQENSPCKFTGSHICLPCSTSCPPGMYQKSVCTERSDQVC). 3 disulfide bridges follow: Cys-347–Cys-370, Cys-373–Cys-387, and Cys-377–Cys-395. N-linked (GlcNAc...) asparagine glycans are attached at residues Asn-398 and Asn-410. Residues 435–455 (AEIGFALFLVAVVSITAALYI) form a helical membrane-spanning segment. The Cytoplasmic portion of the chain corresponds to 456-895 (RYRLRNCRCS…GQSLFLHHNF (440 aa)). Residue Ser-475 is modified to Phosphoserine. The region spanning 512–789 (FKEESIVGKG…KVTTALERAL (278 aa)) is the Protein kinase domain. ATP contacts are provided by residues 518-526 (VGKGSFSCV) and Lys-540. Asp-641 acts as the Proton acceptor in catalysis. The tract at residues 818 to 895 (SWRIGSKRSG…GQSLFLHHNF (78 aa)) is disordered. The span at 865 to 877 (EGRKQQEALRSLE) shows a compositional bias: basic and acidic residues.

The protein belongs to the protein kinase superfamily. Ser/Thr protein kinase family. As to quaternary structure, homodimer. Interacts with PP2A3. Post-translationally, autophosphorylated and phosphorylated by ALE2. In terms of tissue distribution, expressed in seedlings, floral buds, siliques, leaves, shoot apical meristems (SAM), and, to a lower extent, in roots.

The protein localises to the cell membrane. It is found in the endosome. It localises to the multivesicular body membrane. It carries out the reaction L-seryl-[protein] + ATP = O-phospho-L-seryl-[protein] + ADP + H(+). The enzyme catalyses L-threonyl-[protein] + ATP = O-phospho-L-threonyl-[protein] + ADP + H(+). Controls formative cell division in meristems, including root tips and lateral root initiation zones of the pericycle, in response to CLE40 signal. Acts with CLE40p peptide as a ligand-receptor pair in a signal transduction pathway, coordinating movement of the root tip and organization of cell divisions in the root meristem. Required during embryogenesis and development, probably for the differentiation of protoderm and epidermal cells. Involved in the regulation of cellular organization during the development of sepal margins and ovule integument outgrowth and promotes giant cell formation. Can phosphorylate ALE2. The sequence is that of Serine/threonine-protein kinase-like protein ACR4 from Arabidopsis thaliana (Mouse-ear cress).